The sequence spans 121 residues: Large ribosomal subunit protein uL14c (121 aa).

Component of the chloroplast large ribosomal subunit (LSU). Mature 70S chloroplast ribosomes of higher plants consist of a small (30S) and a large (50S) subunit. The 30S small subunit contains 1 molecule of ribosomal RNA (16S rRNA) and 24 different proteins. The 50S large subunit contains 3 rRNA molecules (23S, 5S and 4.5S rRNA) and 33 different proteins.

It localises to the plastid. Its subcellular location is the chloroplast. In terms of biological role, component of the chloroplast ribosome (chloro-ribosome), a dedicated translation machinery responsible for the synthesis of chloroplast genome-encoded proteins, including proteins of the transcription and translation machinery and components of the photosynthetic apparatus. The sequence is that of Large ribosomal subunit protein uL14c from Spinacia oleracea (Spinach).